Here is a 287-residue protein sequence, read N- to C-terminus: UPF0098 protein AF_1698 (287 aa).

It belongs to the UPF0098 family.

This chain is UPF0098 protein AF_1698, found in Archaeoglobus fulgidus (strain ATCC 49558 / DSM 4304 / JCM 9628 / NBRC 100126 / VC-16).